Consider the following 212-residue polypeptide: Glycerol-3-phosphate acyltransferase (212 aa).

6 helical membrane passes run 8–28 (IFLSAALIALAYLIGSIPFAV), 59–79 (AAAALTLLGDAFKGWFALWLA), 90–110 (VFALVALAAFLGHLYPVFLGF), 122–142 (ILLAIHPGLALATAATWVIIA), 148–168 (SSLAALVAAFFAPVYYLFGSG), and 169–189 (VAWYAQGPVGVALAIITLLLF).

The protein belongs to the PlsY family. Probably interacts with PlsX.

The protein localises to the cell inner membrane. The enzyme catalyses an acyl phosphate + sn-glycerol 3-phosphate = a 1-acyl-sn-glycero-3-phosphate + phosphate. It functions in the pathway lipid metabolism; phospholipid metabolism. Catalyzes the transfer of an acyl group from acyl-phosphate (acyl-PO(4)) to glycerol-3-phosphate (G3P) to form lysophosphatidic acid (LPA). This enzyme utilizes acyl-phosphate as fatty acyl donor, but not acyl-CoA or acyl-ACP. In Bordetella petrii (strain ATCC BAA-461 / DSM 12804 / CCUG 43448), this protein is Glycerol-3-phosphate acyltransferase.